Here is a 268-residue protein sequence, read N- to C-terminus: UPF0739 protein C1orf74 homolog (268 aa).

Belongs to the UPF0739 family.

The sequence is that of UPF0739 protein C1orf74 homolog from Salmo salar (Atlantic salmon).